We begin with the raw amino-acid sequence, 714 residues long: VIN3-like protein 2 (714 aa).

The PHD-type zinc finger occupies 164-232 (RCSCCICRKY…CFYCVSCGKA (69 aa)). The Nuclear localization signal signature appears at 239–246 (WKKQLTIA). One can recognise a Fibronectin type-III domain in the interval 366 to 463 (GSTKIRFEDV…INVLTRSAEE (98 aa)). The segment covering 478-498 (LTNCSTLSSNPSSVEAESNND) has biased composition (polar residues). A disordered region spans residues 478-530 (LTNCSTLSSNPSSVEAESNNDYIVPKKPSSKNEDNNSPSVDESAAKRMKRTTD). The VIN3-Interacting Domain (VID) stretch occupies residues 602-714 (SMKDNCNNGD…PSGFCMKLWH (113 aa)).

In terms of assembly, self-interacts. Interacts with VIN3 and VIL1. Component of the plant homeodomain / polycomb repressive complex 2 (PHD-PRC2) large complex during prolonged cold, composed of core PRC2 components (VRN2, EZA1, FIE and MSI1), and three related PHD finger proteins (VIL1, VIL2 and VIN3) that mediates histone H3 trimethylation on 'Lys-27' (H3K27me3).

It is found in the nucleus. In terms of biological role, maybe involved in both the vernalization and photoperiod pathways by regulating gene expression. Binds preferentially to dimethylated histone H3 'Lys-9' (H3K9me2). Promotes flowering in non-inductive photoperiods (e.g. short days) through the maintenance of the epigenetically repressed state of MAF5 via H3K9me2 and plant homeodomain / polycomb repressive complex 2 (PHD-PRC2)-dependent H3K27me3. The polypeptide is VIN3-like protein 2 (VIL2) (Arabidopsis thaliana (Mouse-ear cress)).